The chain runs to 433 residues: Adenylosuccinate synthetase (433 aa).

Residues 11–17 (GDEGKGK) and 39–41 (GHT) each bind GTP. Residue D12 is the Proton acceptor of the active site. Residues D12 and G39 each coordinate Mg(2+). IMP-binding positions include 12–15 (DEGK), 37–40 (NAGH), T134, R148, N230, T245, and R309. The active-site Proton donor is H40. 305–311 (VTTGRKR) lines the substrate pocket. GTP-binding positions include R311, 337 to 339 (KLD), and 419 to 421 (GTG).

The protein belongs to the adenylosuccinate synthetase family. In terms of assembly, homodimer. Mg(2+) is required as a cofactor.

The protein localises to the cytoplasm. It catalyses the reaction IMP + L-aspartate + GTP = N(6)-(1,2-dicarboxyethyl)-AMP + GDP + phosphate + 2 H(+). It functions in the pathway purine metabolism; AMP biosynthesis via de novo pathway; AMP from IMP: step 1/2. Its function is as follows. Plays an important role in the de novo pathway and in the salvage pathway of purine nucleotide biosynthesis. Catalyzes the first committed step in the biosynthesis of AMP from IMP. The polypeptide is Adenylosuccinate synthetase (Saccharomyces cerevisiae (strain AWRI1631) (Baker's yeast)).